The following is a 477-amino-acid chain: Glutamyl-tRNA(Gln) amidotransferase subunit A (477 aa).

Residues Lys76 and Ser151 each act as charge relay system in the active site. Ser175 serves as the catalytic Acyl-ester intermediate.

Belongs to the amidase family. GatA subfamily. As to quaternary structure, heterotrimer of A, B and C subunits.

The catalysed reaction is L-glutamyl-tRNA(Gln) + L-glutamine + ATP + H2O = L-glutaminyl-tRNA(Gln) + L-glutamate + ADP + phosphate + H(+). Its function is as follows. Allows the formation of correctly charged Gln-tRNA(Gln) through the transamidation of misacylated Glu-tRNA(Gln) in organisms which lack glutaminyl-tRNA synthetase. The reaction takes place in the presence of glutamine and ATP through an activated gamma-phospho-Glu-tRNA(Gln). In Prosthecochloris aestuarii (strain DSM 271 / SK 413), this protein is Glutamyl-tRNA(Gln) amidotransferase subunit A.